The following is a 213-amino-acid chain: Orotate phosphoribosyltransferase (213 aa).

Position 26 (Lys26) interacts with 5-phospho-alpha-D-ribose 1-diphosphate. 34–35 lines the orotate pocket; that stretch reads FF. Residues 72-73, Arg99, Lys100, Lys103, His105, and 124-132 each bind 5-phospho-alpha-D-ribose 1-diphosphate; these read YK and DDVITAGTA. Residues Thr128 and Arg156 each coordinate orotate.

Belongs to the purine/pyrimidine phosphoribosyltransferase family. PyrE subfamily. As to quaternary structure, homodimer. The cofactor is Mg(2+).

The catalysed reaction is orotidine 5'-phosphate + diphosphate = orotate + 5-phospho-alpha-D-ribose 1-diphosphate. It participates in pyrimidine metabolism; UMP biosynthesis via de novo pathway; UMP from orotate: step 1/2. In terms of biological role, catalyzes the transfer of a ribosyl phosphate group from 5-phosphoribose 1-diphosphate to orotate, leading to the formation of orotidine monophosphate (OMP). The protein is Orotate phosphoribosyltransferase of Vibrio vulnificus (strain CMCP6).